The primary structure comprises 360 residues: SPRY domain-containing SOCS box protein 3 (360 aa).

Residues 21–54 (DQDGRSPALHAEEEAWGYDSDGQHSNSDSDTDLL) are disordered. One can recognise a B30.2/SPRY domain in the interval 84–274 (SLHPFRQIKS…MKVIRSCCCR (191 aa)). One can recognise an SOCS box domain in the interval 264–315 (SMKVIRSCCCRTSLQYLCCARLRQLLPGSVDSLEVLPLPPGLKQVLSNKLGW). Positions 322 to 350 (NRSSQHKGDGSATTSCGSYSDSSCTPGHD) are disordered. Residues 332–346 (SATTSCGSYSDSSCT) are compositionally biased toward polar residues.

It belongs to the SPSB family. Substrate-recognition component of the ECS(SPSB3) complex, composed of spsb3, cul5, elob, elob and rnf7/rbx2.

Its subcellular location is the nucleus. Its pathway is protein modification; protein ubiquitination. Its function is as follows. Substrate-recognition component of a cullin-5-RING E3 ubiquitin-protein ligase complex (ECS complex, also named CRL5 complex), which mediates the ubiquitination and subsequent proteasomal degradation of target proteins. This Xenopus laevis (African clawed frog) protein is SPRY domain-containing SOCS box protein 3 (spsb3).